A 109-amino-acid chain; its full sequence is Iron-sulfur cluster assembly protein CyaY (109 aa).

Belongs to the frataxin family.

Functionally, involved in iron-sulfur (Fe-S) cluster assembly. May act as a regulator of Fe-S biogenesis. This Shewanella baltica (strain OS155 / ATCC BAA-1091) protein is Iron-sulfur cluster assembly protein CyaY.